The primary structure comprises 219 residues: Probable GTP-binding protein EngB (219 aa).

Positions V31 to P205 constitute an EngB-type G domain. GTP contacts are provided by residues G39–S46, G66–L70, D84–G87, T151–D154, and F184–A186. Mg(2+) contacts are provided by S46 and T68.

It belongs to the TRAFAC class TrmE-Era-EngA-EngB-Septin-like GTPase superfamily. EngB GTPase family. Mg(2+) is required as a cofactor.

In terms of biological role, necessary for normal cell division and for the maintenance of normal septation. The sequence is that of Probable GTP-binding protein EngB from Shewanella sp. (strain MR-7).